The primary structure comprises 877 residues: Alanine--tRNA ligase (877 aa).

The Zn(2+) site is built by His-567, His-571, Cys-669, and His-673.

This sequence belongs to the class-II aminoacyl-tRNA synthetase family. The cofactor is Zn(2+).

It localises to the cytoplasm. The catalysed reaction is tRNA(Ala) + L-alanine + ATP = L-alanyl-tRNA(Ala) + AMP + diphosphate. Functionally, catalyzes the attachment of alanine to tRNA(Ala) in a two-step reaction: alanine is first activated by ATP to form Ala-AMP and then transferred to the acceptor end of tRNA(Ala). Also edits incorrectly charged Ser-tRNA(Ala) and Gly-tRNA(Ala) via its editing domain. In Rickettsia bellii (strain RML369-C), this protein is Alanine--tRNA ligase.